Consider the following 421-residue polypeptide: Serine--tRNA ligase (421 aa).

Residue 225–227 (TAE) participates in L-serine binding. Residues 256–258 (RSE) and Val-272 each bind ATP. Glu-279 contributes to the L-serine binding site. Position 345–348 (345–348 (ETHS)) interacts with ATP. Thr-380 contacts L-serine.

This sequence belongs to the class-II aminoacyl-tRNA synthetase family. Type-1 seryl-tRNA synthetase subfamily. In terms of assembly, homodimer. The tRNA molecule binds across the dimer.

It localises to the cytoplasm. The enzyme catalyses tRNA(Ser) + L-serine + ATP = L-seryl-tRNA(Ser) + AMP + diphosphate + H(+). The catalysed reaction is tRNA(Sec) + L-serine + ATP = L-seryl-tRNA(Sec) + AMP + diphosphate + H(+). Its pathway is aminoacyl-tRNA biosynthesis; selenocysteinyl-tRNA(Sec) biosynthesis; L-seryl-tRNA(Sec) from L-serine and tRNA(Sec): step 1/1. Its function is as follows. Catalyzes the attachment of serine to tRNA(Ser). Is also able to aminoacylate tRNA(Sec) with serine, to form the misacylated tRNA L-seryl-tRNA(Sec), which will be further converted into selenocysteinyl-tRNA(Sec). This chain is Serine--tRNA ligase, found in Thermus thermophilus (strain ATCC 27634 / DSM 579 / HB8).